The following is a 588-amino-acid chain: Histone deacetylase 9 (588 aa).

Ser-22 carries the phosphoserine modification. The tract at residues Pro-23–Arg-27 is interaction with CTBP1. Positions Arg-110–Leu-147 are enriched in basic and acidic residues. 3 disordered regions span residues Arg-110–Gly-170, Thr-183–Leu-242, and Ser-264–Glu-301. Residues Arg-136 to Lys-154 form an interaction with MEF2 region. Composition is skewed to polar residues over residues Lys-154–Asn-166 and Leu-185–Tyr-199. Residues Leu-175–Ala-343 form an interaction with MAPK10 region. Positions Asp-208–Ala-219 are enriched in basic and acidic residues. Positions Thr-218–Val-261 are interaction with ETV6. A Phosphoserine modification is found at Ser-220. Basic and acidic residues predominate over residues Lys-233–Leu-242. Ser-240 is modified (phosphoserine; by DYRK1B). A compositionally biased stretch (low complexity) spans Ser-264–Gly-284. The residue at position 450 (Ser-450) is a Phosphoserine. The disordered stretch occupies residues Gln-493–Val-533. The span at Met-514 to Ala-525 shows a compositional bias: basic and acidic residues. Ser-552 bears the Phosphoserine mark.

This sequence belongs to the histone deacetylase family. HD type 2 subfamily. In terms of assembly, homodimer. Interacts with ETV6. Interacts with MEF2, HDAC1, HDAC3, HDAC4, HDAC5, CTBP1 and MAPK10. The phosphorylated form interacts with 14-3-3. Interacts with FOXP3 in the absence of T-cell stimulation. Post-translationally, sumoylated. In terms of processing, phosphorylated on Ser-220 and Ser-450; which promotes 14-3-3-binding, impairs interaction with MEF2, and antagonizes antimyogenic activity. Phosphorylated on Ser-240 by DYRK1B; which impairs nuclear accumulation. Phosphorylated by the PKC kinases PKN1 and PKN2, impairing nuclear import. As to expression, expressed at high levels in heart, brain and spleen. Expressed in skeletal muscle.

It is found in the nucleus. It catalyses the reaction N(6)-acetyl-L-lysyl-[histone] + H2O = L-lysyl-[histone] + acetate. In terms of biological role, devoided of intrinsic deacetylase activity, promotes the deacetylation of lysine residues on the N-terminal part of the core histones (H2A, H2B, H3 and H4) by recruiting HDAC1 and HDAC3. Histone deacetylation gives a tag for epigenetic repression and plays an important role in transcriptional regulation, cell cycle progression and developmental events. Represses MEF2-dependent transcription, inhibits skeletal myogenesis and may be involved in heart development. Protects neurons from apoptosis, both by inhibiting JUN phosphorylation by MAPK10 and by repressing JUN transcription via HDAC1 recruitment to JUN promoter. The protein is Histone deacetylase 9 (Hdac9) of Mus musculus (Mouse).